A 220-amino-acid chain; its full sequence is uncharacterized protein (220 aa).

Residues 20-42 (FFKKLVPIIIIISIVVITIMVII) form a helical membrane-spanning segment.

The protein localises to the membrane. This is an uncharacterized protein from Rickettsia prowazekii (strain Madrid E).